Reading from the N-terminus, the 497-residue chain is Probable malate:quinone oxidoreductase (497 aa).

This sequence belongs to the MQO family. FAD serves as cofactor.

It catalyses the reaction (S)-malate + a quinone = a quinol + oxaloacetate. Its pathway is carbohydrate metabolism; tricarboxylic acid cycle; oxaloacetate from (S)-malate (quinone route): step 1/1. This is Probable malate:quinone oxidoreductase from Hahella chejuensis (strain KCTC 2396).